Reading from the N-terminus, the 72-residue chain is Male-specific sperm protein Mst84Dd (72 aa).

This sequence belongs to the MST(3)CGP family. As to expression, testis.

This is Male-specific sperm protein Mst84Dd (Mst84Dd) from Drosophila melanogaster (Fruit fly).